Consider the following 513-residue polypeptide: Trigger factor (513 aa).

The region spanning 164–249 is the PPIase FKBP-type domain; it reads GDQIIIDFLG…VKAVKNAGEF (86 aa). Residues 436–513 are disordered; that stretch reads QAAIEAEEGA…KAPAKKKAEG (78 aa). Positions 452–461 are enriched in basic residues; it reads AKKAPAKKKA. Residues 489–498 show a composition bias toward low complexity; it reads ADEAPAAEEA. The segment covering 501 to 513 has biased composition (basic residues); sequence AKKKAPAKKKAEG.

This sequence belongs to the FKBP-type PPIase family. Tig subfamily.

It is found in the cytoplasm. It carries out the reaction [protein]-peptidylproline (omega=180) = [protein]-peptidylproline (omega=0). In terms of biological role, involved in protein export. Acts as a chaperone by maintaining the newly synthesized protein in an open conformation. Functions as a peptidyl-prolyl cis-trans isomerase. The sequence is that of Trigger factor from Novosphingobium aromaticivorans (strain ATCC 700278 / DSM 12444 / CCUG 56034 / CIP 105152 / NBRC 16084 / F199).